Consider the following 977-residue polypeptide: Receptor-like protein kinase 7 (977 aa).

A signal peptide spans 1 to 28 (MAPSLRNFNFFHRFSTFLVFSLFSVVSS). The Extracellular segment spans residues 29–608 (DDLQVLLKLK…NPSRSHGDTR (580 aa)). LRR repeat units follow at residues 71–95 (RGNV…SVCE), 96–119 (IQSL…DLKN), and 121–145 (TSLK…SLNQ). Asn-73 and Asn-119 each carry an N-linked (GlcNAc...) asparagine glycan. Residues Asn-152 and Asn-167 are each glycosylated (N-linked (GlcNAc...) asparagine). LRR repeat units lie at residues 168-194 (ATSL…VVSL), 195-218 (KKLS…IGDL), 219-242 (TELR…ISKL), 244-265 (NLWQ…GFGN), 267-289 (KNLT…LRSL), 290-312 (TNLV…EFGE), 313-337 (FKDL…LGSL), 339-361 (DFDF…MCKN), 362-385 (GKMK…YANC), 386-409 (LTLQ…LWGL), 411-433 (KLEI…IKNG), 434-457 (KMLG…IGDT), 458-481 (ESLT…IGKL), 482-505 (KGLS…IGSC), 507-529 (MLSD…LGSL), 530-553 (PTLN…LSSL), and 555-578 (LSLL…SYNG). Asn-204 is a glycosylation site (N-linked (GlcNAc...) asparagine). N-linked (GlcNAc...) asparagine glycosylation is found at Asn-252 and Asn-268. Asn-318 is a glycosylation site (N-linked (GlcNAc...) asparagine). N-linked (GlcNAc...) asparagine glycans are attached at residues Asn-373 and Asn-399. N-linked (GlcNAc...) asparagine glycans are attached at residues Asn-536 and Asn-577. A helical transmembrane segment spans residues 609 to 629 (VFVLCIVFGLLILLASLVFFL). At 630 to 977 (YLKKTEKKEG…ESDVKVKEIS (348 aa)) the chain is on the cytoplasmic side. The 294-residue stretch at 666 to 959 (IKEENLIGRG…QMIEDAEPCR (294 aa)) folds into the Protein kinase domain. Residues 672 to 680 (IGRGGCGDV) and Lys-694 each bind ATP. Asp-805 (proton acceptor) is an active-site residue.

Belongs to the protein kinase superfamily. Ser/Thr protein kinase family. As to quaternary structure, interacts with PIP1. As to expression, expressed in roots, stems and dry seeds. Expressed at junctions between organs, such as the insertion zones of stamens, petals and sepals, the transition zones of floral stem and pedicel, pedicel and silique, and floral stem and cauline leaves.

It localises to the membrane. It carries out the reaction L-seryl-[protein] + ATP = O-phospho-L-seryl-[protein] + ADP + H(+). The catalysed reaction is L-threonyl-[protein] + ATP = O-phospho-L-threonyl-[protein] + ADP + H(+). Functionally, plays a role in pattern-triggered immunity (PTI) signaling induced by pathogen-associated molecular patterns (PAMPs). Acts as a receptor for PIP1 defense peptide. PIP1 is an endogenous secreted peptide that acts as elicitor of immune response and positive regulator of defense response. Involved in the control of seed germination speed, in tolerance to oxidative stress and in maintaining seed longevity. This is Receptor-like protein kinase 7 from Arabidopsis thaliana (Mouse-ear cress).